The sequence spans 239 residues: Lectin (239 aa).

N-linked (GlcNAc...) asparagine glycosylation is found at N17 and N113.

It belongs to the leguminous lectin family. Homodimer.

Galactose and N-acetyllactosamine specific lectin. The polypeptide is Lectin (Erythrina crista-galli (Cockspur coral tree)).